The chain runs to 300 residues: tRNA dimethylallyltransferase (300 aa).

11-18 (GPTAVGKS) contributes to the ATP binding site. 13-18 (TAVGKS) lines the substrate pocket. The segment at 35 to 38 (DSIQ) is interaction with substrate tRNA.

It belongs to the IPP transferase family. In terms of assembly, monomer. Requires Mg(2+) as cofactor.

The enzyme catalyses adenosine(37) in tRNA + dimethylallyl diphosphate = N(6)-dimethylallyladenosine(37) in tRNA + diphosphate. In terms of biological role, catalyzes the transfer of a dimethylallyl group onto the adenine at position 37 in tRNAs that read codons beginning with uridine, leading to the formation of N6-(dimethylallyl)adenosine (i(6)A). The sequence is that of tRNA dimethylallyltransferase from Borrelia turicatae (strain 91E135).